The chain runs to 397 residues: Succinyl-diaminopimelate desuccinylase (397 aa).

His74 provides a ligand contact to Zn(2+). The active site involves Asp76. Residue Asp107 coordinates Zn(2+). The active-site Proton acceptor is Glu141. Zn(2+)-binding residues include Glu142, Glu170, and His368.

It belongs to the peptidase M20A family. DapE subfamily. Homodimer. Requires Zn(2+) as cofactor. Co(2+) is required as a cofactor.

It catalyses the reaction N-succinyl-(2S,6S)-2,6-diaminopimelate + H2O = (2S,6S)-2,6-diaminopimelate + succinate. It functions in the pathway amino-acid biosynthesis; L-lysine biosynthesis via DAP pathway; LL-2,6-diaminopimelate from (S)-tetrahydrodipicolinate (succinylase route): step 3/3. In terms of biological role, catalyzes the hydrolysis of N-succinyl-L,L-diaminopimelic acid (SDAP), forming succinate and LL-2,6-diaminopimelate (DAP), an intermediate involved in the bacterial biosynthesis of lysine and meso-diaminopimelic acid, an essential component of bacterial cell walls. This chain is Succinyl-diaminopimelate desuccinylase, found in Mesorhizobium japonicum (strain LMG 29417 / CECT 9101 / MAFF 303099) (Mesorhizobium loti (strain MAFF 303099)).